We begin with the raw amino-acid sequence, 186 residues long: Peptidyl-tRNA hydrolase (186 aa).

Tyr-14 lines the tRNA pocket. His-19 functions as the Proton acceptor in the catalytic mechanism. TRNA is bound by residues Tyr-64, Asn-66, and Asn-112.

The protein belongs to the PTH family. In terms of assembly, monomer.

The protein localises to the cytoplasm. The enzyme catalyses an N-acyl-L-alpha-aminoacyl-tRNA + H2O = an N-acyl-L-amino acid + a tRNA + H(+). In terms of biological role, hydrolyzes ribosome-free peptidyl-tRNAs (with 1 or more amino acids incorporated), which drop off the ribosome during protein synthesis, or as a result of ribosome stalling. Functionally, catalyzes the release of premature peptidyl moieties from peptidyl-tRNA molecules trapped in stalled 50S ribosomal subunits, and thus maintains levels of free tRNAs and 50S ribosomes. The protein is Peptidyl-tRNA hydrolase of Bacillus cereus (strain ATCC 10987 / NRS 248).